A 485-amino-acid polypeptide reads, in one-letter code: Zinc finger protein 639 (485 aa).

Positions 1-14 (MNEYPKKRKRKTLH) are enriched in basic residues. The disordered stretch occupies residues 1–20 (MNEYPKKRKRKTLHPSRYSD). Ser60 carries the post-translational modification Phosphoserine. A Glycyl lysine isopeptide (Lys-Gly) (interchain with G-Cter in SUMO2) cross-link involves residue Lys76. Ser88 is modified (phosphoserine). Glycyl lysine isopeptide (Lys-Gly) (interchain with G-Cter in SUMO2) cross-links involve residues Lys177, Lys181, and Lys226. 8 consecutive C2H2-type zinc fingers follow at residues 204-227 (YKCE…ILKH), 233-255 (NVCR…AKLH), 260-283 (YICK…ADTH), 289-311 (YWCE…FQEH), 374-397 (FVCQ…AIEH), 403-425 (HVCD…LNSH), 431-454 (YLCQ…DFKH), and 460-482 (HKCS…LPVH). Positions 371-455 (KNFFVCQVCG…LKIHLDFKHS (85 aa)) are interaction with CTNNA2.

The protein belongs to the krueppel C2H2-type zinc-finger protein family. As to quaternary structure, interacts with CTNNA2.

Its subcellular location is the nucleus. In terms of biological role, binds DNA and may function as a transcriptional repressor. The chain is Zinc finger protein 639 (ZNF639) from Bos taurus (Bovine).